The primary structure comprises 359 residues: D-alanine--D-alanine ligase (359 aa).

The region spanning Lys141–Asn346 is the ATP-grasp domain. Ile172–Glu227 is a binding site for ATP. Residues Asp299, Glu313, and Asn315 each contribute to the Mg(2+) site.

It belongs to the D-alanine--D-alanine ligase family. Requires Mg(2+) as cofactor. Mn(2+) serves as cofactor.

The protein resides in the cytoplasm. The enzyme catalyses 2 D-alanine + ATP = D-alanyl-D-alanine + ADP + phosphate + H(+). Its pathway is cell wall biogenesis; peptidoglycan biosynthesis. Functionally, cell wall formation. This Thermoanaerobacter pseudethanolicus (strain ATCC 33223 / 39E) (Clostridium thermohydrosulfuricum) protein is D-alanine--D-alanine ligase.